The primary structure comprises 688 residues: Elongation factor G (688 aa).

Residues 8-282 (EKFRNIGIMA…AVVDFMPSPL (275 aa)) form the tr-type G domain. Residues 17–24 (AHIDAGKT), 81–85 (DTPGH), and 135–138 (NKMD) each bind GTP. The tract at residues 282–305 (LDIPPIKGTDPETGEETDRPADDN) is disordered.

The protein belongs to the TRAFAC class translation factor GTPase superfamily. Classic translation factor GTPase family. EF-G/EF-2 subfamily.

It localises to the cytoplasm. Its function is as follows. Catalyzes the GTP-dependent ribosomal translocation step during translation elongation. During this step, the ribosome changes from the pre-translocational (PRE) to the post-translocational (POST) state as the newly formed A-site-bound peptidyl-tRNA and P-site-bound deacylated tRNA move to the P and E sites, respectively. Catalyzes the coordinated movement of the two tRNA molecules, the mRNA and conformational changes in the ribosome. The protein is Elongation factor G of Clostridium kluyveri (strain NBRC 12016).